A 236-amino-acid chain; its full sequence is Small ribosomal subunit protein bS21m (236 aa).

The segment at lysine 65 to tryptophan 136 is disordered. A compositionally biased stretch (low complexity) spans serine 107–serine 131.

This sequence belongs to the bacterial ribosomal protein bS21 family. As to quaternary structure, component of the mitochondrial small ribosomal subunit (mt-SSU). Mature N.crassa 74S mitochondrial ribosomes consist of a small (37S) and a large (54S) subunit. The 37S small subunit contains a 16S ribosomal RNA (16S mt-rRNA) and 32 different proteins. The 54S large subunit contains a 23S rRNA (23S mt-rRNA) and 42 different proteins.

The protein localises to the mitochondrion. In terms of biological role, component of the mitochondrial ribosome (mitoribosome), a dedicated translation machinery responsible for the synthesis of mitochondrial genome-encoded proteins, including at least some of the essential transmembrane subunits of the mitochondrial respiratory chain. The mitoribosomes are attached to the mitochondrial inner membrane and translation products are cotranslationally integrated into the membrane. The sequence is that of Small ribosomal subunit protein bS21m (mrp21) from Neurospora crassa (strain ATCC 24698 / 74-OR23-1A / CBS 708.71 / DSM 1257 / FGSC 987).